We begin with the raw amino-acid sequence, 284 residues long: Hypersensitive-induced response protein 1 (284 aa).

The N-myristoyl glycine moiety is linked to residue glycine 2.

As to quaternary structure, interacts with LRR1.

It is found in the cell membrane. Positive regulator of hypersensitive response (HR)-like cell death. May be involved in potassium ion channel regulation. This is Hypersensitive-induced response protein 1 from Oryza sativa subsp. japonica (Rice).